A 188-amino-acid polypeptide reads, in one-letter code: dCTP deaminase (188 aa).

109–114 (KSTYAR) serves as a coordination point for dCTP. Glu135 serves as the catalytic Proton donor/acceptor. Residues Gln154, Tyr168, and Gln178 each contribute to the dCTP site.

It belongs to the dCTP deaminase family. Homotrimer.

The enzyme catalyses dCTP + H2O + H(+) = dUTP + NH4(+). It participates in pyrimidine metabolism; dUMP biosynthesis; dUMP from dCTP (dUTP route): step 1/2. Its function is as follows. Catalyzes the deamination of dCTP to dUTP. The protein is dCTP deaminase of Helicobacter hepaticus (strain ATCC 51449 / 3B1).